The chain runs to 477 residues: Aspartyl/glutamyl-tRNA(Asn/Gln) amidotransferase subunit B (477 aa).

This sequence belongs to the GatB/GatE family. GatB subfamily. As to quaternary structure, heterotrimer of A, B and C subunits.

It carries out the reaction L-glutamyl-tRNA(Gln) + L-glutamine + ATP + H2O = L-glutaminyl-tRNA(Gln) + L-glutamate + ADP + phosphate + H(+). It catalyses the reaction L-aspartyl-tRNA(Asn) + L-glutamine + ATP + H2O = L-asparaginyl-tRNA(Asn) + L-glutamate + ADP + phosphate + 2 H(+). Functionally, allows the formation of correctly charged Asn-tRNA(Asn) or Gln-tRNA(Gln) through the transamidation of misacylated Asp-tRNA(Asn) or Glu-tRNA(Gln) in organisms which lack either or both of asparaginyl-tRNA or glutaminyl-tRNA synthetases. The reaction takes place in the presence of glutamine and ATP through an activated phospho-Asp-tRNA(Asn) or phospho-Glu-tRNA(Gln). The polypeptide is Aspartyl/glutamyl-tRNA(Asn/Gln) amidotransferase subunit B (Nitrosococcus oceani (strain ATCC 19707 / BCRC 17464 / JCM 30415 / NCIMB 11848 / C-107)).